A 566-amino-acid chain; its full sequence is Insulinoma-associated protein 2 (566 aa).

Positions 1–20 (MPRGFLVKRTKRTGGLYRVR) are SNAG domain. Residues 32–117 (QGAPPFLEEA…PSPSPAKPAG (86 aa)) form a disordered region. Positions 103–113 (GPSPSPSPSPA) are enriched in pro residues. The C2H2-type 1; atypical zinc finger occupies 263 to 283 (FICQLCKEQYADPFALAQHRC). Residues 291-313 (YRCPECDKVFSCPANLASHRRWH) form a C2H2-type 2 zinc finger. The interval 310-418 (RRWHKPRPAA…RRVPVPGSTS (109 aa)) is disordered. Residues 318 to 348 (AAANAATVSSADGKPPSSSSSSSRDSGAIAS) are compositionally biased toward low complexity. A compositionally biased stretch (basic and acidic residues) spans 352–369 (EGKENSRIERTADQHPQA). 3 consecutive C2H2-type zinc fingers follow at residues 426-448 (FVCPYCHKKFRRQAYLRKHLSTH), 470-492 (FACPLCGAHFPTADIREKHRLWH), and 525-548 (FSCKHCPSTFFSSPGLTRHINKCH).

In terms of tissue distribution, expressed in heart, liver, skeletal muscle, kidney and pancreas, and, to a lesser extent, in brain, lung and spleen. In the pancreas, expressed in islet cells, including insulin- and glucagon-producing alpha- and beta-cells, but not in acinar cells (at protein level). Detected in adrenal glands, particularly in the deeper layer of the cortex (at protein level).

The protein resides in the cytoplasm. It is found in the nucleus. May function as a growth suppressor or tumor suppressor in liver cells and in certain neurons. In Homo sapiens (Human), this protein is Insulinoma-associated protein 2 (INSM2).